Consider the following 570-residue polypeptide: Urease subunit alpha (570 aa).

Residues 131–570 enclose the Urease domain; sequence GGFDAHIHFI…LPMAQRYFLF (440 aa). Residues His-136, His-138, and Lys-219 each coordinate Ni(2+). Lys-219 bears the N6-carboxylysine mark. Substrate is bound at residue His-221. The Ni(2+) site is built by His-248 and His-274. Catalysis depends on His-322, which acts as the Proton donor. Asp-362 is a Ni(2+) binding site.

It belongs to the metallo-dependent hydrolases superfamily. Urease alpha subunit family. Heterotrimer of UreA (gamma), UreB (beta) and UreC (alpha) subunits. Three heterotrimers associate to form the active enzyme. It depends on Ni cation as a cofactor. Carboxylation allows a single lysine to coordinate two nickel ions.

The protein localises to the cytoplasm. The catalysed reaction is urea + 2 H2O + H(+) = hydrogencarbonate + 2 NH4(+). The protein operates within nitrogen metabolism; urea degradation; CO(2) and NH(3) from urea (urease route): step 1/1. The chain is Urease subunit alpha from Chelativorans sp. (strain BNC1).